A 186-amino-acid polypeptide reads, in one-letter code: Large ribosomal subunit protein uL5 (186 aa).

Belongs to the universal ribosomal protein uL5 family. As to quaternary structure, part of the 50S ribosomal subunit; part of the 5S rRNA/L5/L18/L25 subcomplex. Contacts the 5S rRNA and the P site tRNA. Forms a bridge to the 30S subunit in the 70S ribosome.

Functionally, this is one of the proteins that bind and probably mediate the attachment of the 5S RNA into the large ribosomal subunit, where it forms part of the central protuberance. In the 70S ribosome it contacts protein S13 of the 30S subunit (bridge B1b), connecting the 2 subunits; this bridge is implicated in subunit movement. Contacts the P site tRNA; the 5S rRNA and some of its associated proteins might help stabilize positioning of ribosome-bound tRNAs. This chain is Large ribosomal subunit protein uL5, found in Mycoplasmopsis synoviae (strain 53) (Mycoplasma synoviae).